Here is an 86-residue protein sequence, read N- to C-terminus: Large ribosomal subunit protein bL27 (86 aa).

Gly residues predominate over residues 1–10 (MAQKKGGGST). The interval 1 to 21 (MAQKKGGGSTRNGRDSESKRL) is disordered.

It belongs to the bacterial ribosomal protein bL27 family.

The protein is Large ribosomal subunit protein bL27 of Cupriavidus taiwanensis (strain DSM 17343 / BCRC 17206 / CCUG 44338 / CIP 107171 / LMG 19424 / R1) (Ralstonia taiwanensis (strain LMG 19424)).